A 259-amino-acid polypeptide reads, in one-letter code: Hydroxyethylthiazole kinase (259 aa).

Met-38 is a substrate binding site. Positions 113 and 158 each coordinate ATP. Gly-185 contributes to the substrate binding site.

This sequence belongs to the Thz kinase family. Mg(2+) is required as a cofactor.

The catalysed reaction is 5-(2-hydroxyethyl)-4-methylthiazole + ATP = 4-methyl-5-(2-phosphooxyethyl)-thiazole + ADP + H(+). Its pathway is cofactor biosynthesis; thiamine diphosphate biosynthesis; 4-methyl-5-(2-phosphoethyl)-thiazole from 5-(2-hydroxyethyl)-4-methylthiazole: step 1/1. Its function is as follows. Catalyzes the phosphorylation of the hydroxyl group of 4-methyl-5-beta-hydroxyethylthiazole (THZ). The protein is Hydroxyethylthiazole kinase of Leuconostoc citreum (strain KM20).